A 271-amino-acid chain; its full sequence is 3-methyl-2-oxobutanoate hydroxymethyltransferase (271 aa).

2 residues coordinate Mg(2+): aspartate 53 and aspartate 92. Residues 53–54 (DS), aspartate 92, and lysine 120 each bind 3-methyl-2-oxobutanoate. Glutamate 122 contacts Mg(2+). The Proton acceptor role is filled by glutamate 189.

The protein belongs to the PanB family. In terms of assembly, homodecamer; pentamer of dimers. Mg(2+) is required as a cofactor.

It is found in the cytoplasm. It catalyses the reaction 3-methyl-2-oxobutanoate + (6R)-5,10-methylene-5,6,7,8-tetrahydrofolate + H2O = 2-dehydropantoate + (6S)-5,6,7,8-tetrahydrofolate. It functions in the pathway cofactor biosynthesis; (R)-pantothenate biosynthesis; (R)-pantoate from 3-methyl-2-oxobutanoate: step 1/2. In terms of biological role, catalyzes the reversible reaction in which hydroxymethyl group from 5,10-methylenetetrahydrofolate is transferred onto alpha-ketoisovalerate to form ketopantoate. The sequence is that of 3-methyl-2-oxobutanoate hydroxymethyltransferase from Paraburkholderia phytofirmans (strain DSM 17436 / LMG 22146 / PsJN) (Burkholderia phytofirmans).